A 173-amino-acid chain; its full sequence is Crossover junction endodeoxyribonuclease RuvC (173 aa).

Active-site residues include Asp8, Glu67, and Asp139. Positions 8, 67, and 139 each coordinate Mg(2+).

Belongs to the RuvC family. As to quaternary structure, homodimer which binds Holliday junction (HJ) DNA. The HJ becomes 2-fold symmetrical on binding to RuvC with unstacked arms; it has a different conformation from HJ DNA in complex with RuvA. In the full resolvosome a probable DNA-RuvA(4)-RuvB(12)-RuvC(2) complex forms which resolves the HJ. It depends on Mg(2+) as a cofactor.

It localises to the cytoplasm. It catalyses the reaction Endonucleolytic cleavage at a junction such as a reciprocal single-stranded crossover between two homologous DNA duplexes (Holliday junction).. In terms of biological role, the RuvA-RuvB-RuvC complex processes Holliday junction (HJ) DNA during genetic recombination and DNA repair. Endonuclease that resolves HJ intermediates. Cleaves cruciform DNA by making single-stranded nicks across the HJ at symmetrical positions within the homologous arms, yielding a 5'-phosphate and a 3'-hydroxyl group; requires a central core of homology in the junction. The consensus cleavage sequence is 5'-(A/T)TT(C/G)-3'. Cleavage occurs on the 3'-side of the TT dinucleotide at the point of strand exchange. HJ branch migration catalyzed by RuvA-RuvB allows RuvC to scan DNA until it finds its consensus sequence, where it cleaves and resolves the cruciform DNA. In Edwardsiella ictaluri (strain 93-146), this protein is Crossover junction endodeoxyribonuclease RuvC.